The chain runs to 185 residues: Probable RNA polymerase sigma-C factor (185 aa).

The Polymerase core binding motif lies at 52–65 (DLTQETFLRAIGAI). The segment at residues 149–168 (YADAAAVCGCPVGTIRSRVA) is a DNA-binding region (H-T-H motif).

This sequence belongs to the sigma-70 factor family. ECF subfamily.

Functionally, sigma factors are initiation factors that promote the attachment of RNA polymerase to specific initiation sites and are then released. This Mycobacterium bovis (strain ATCC BAA-935 / AF2122/97) protein is Probable RNA polymerase sigma-C factor (sigC).